A 121-amino-acid polypeptide reads, in one-letter code: Succinate dehydrogenase assembly factor 3, mitochondrial (121 aa).

The transit peptide at 1–35 (MRPSLVRLVRPRRPERKTSPILPPLKLYKALLRAH) directs the protein to the mitochondrion.

The protein belongs to the complex I LYR family. SDHAF3 subfamily. In terms of assembly, interacts with the iron-sulfur protein subunit within the SDH catalytic dimer.

The protein resides in the mitochondrion matrix. In terms of biological role, plays an essential role in the assembly of succinate dehydrogenase (SDH), an enzyme complex (also referred to as respiratory complex II) that is a component of both the tricarboxylic acid (TCA) cycle and the mitochondrial electron transport chain, and which couples the oxidation of succinate to fumarate with the reduction of ubiquinone (coenzyme Q) to ubiquinol. Promotes maturation of the iron-sulfur protein subunit of the SDH catalytic dimer, protecting it from the deleterious effects of oxidants. May act together with SDHAF1. The protein is Succinate dehydrogenase assembly factor 3, mitochondrial of Debaryomyces hansenii (strain ATCC 36239 / CBS 767 / BCRC 21394 / JCM 1990 / NBRC 0083 / IGC 2968) (Yeast).